We begin with the raw amino-acid sequence, 97 residues long: Co-chaperonin GroES (97 aa).

The protein belongs to the GroES chaperonin family. Heptamer of 7 subunits arranged in a ring. Interacts with the chaperonin GroEL.

The protein localises to the cytoplasm. Functionally, together with the chaperonin GroEL, plays an essential role in assisting protein folding. The GroEL-GroES system forms a nano-cage that allows encapsulation of the non-native substrate proteins and provides a physical environment optimized to promote and accelerate protein folding. GroES binds to the apical surface of the GroEL ring, thereby capping the opening of the GroEL channel. The polypeptide is Co-chaperonin GroES (Pseudomonas fluorescens (strain ATCC BAA-477 / NRRL B-23932 / Pf-5)).